Reading from the N-terminus, the 265-residue chain is Undecaprenyl-diphosphatase (265 aa).

7 helical membrane-spanning segments follow: residues 41 to 61 (IAYT…LIYF), 75 to 95 (LKFL…LYVI), 104 to 124 (YNPS…GIYI), 137 to 157 (LSTK…LPGV), 180 to 200 (YSYL…LLFT), 215 to 235 (GIAL…GFLL), and 244 to 264 (YLID…GLII).

Belongs to the UppP family.

The protein resides in the cell membrane. It catalyses the reaction di-trans,octa-cis-undecaprenyl diphosphate + H2O = di-trans,octa-cis-undecaprenyl phosphate + phosphate + H(+). Its function is as follows. Catalyzes the dephosphorylation of undecaprenyl diphosphate (UPP). The chain is Undecaprenyl-diphosphatase from Saccharolobus islandicus (strain Y.G.57.14 / Yellowstone #1) (Sulfolobus islandicus).